The following is a 406-amino-acid chain: Phosphopentomutase (406 aa).

Positions 10, 305, 310, 346, 347, and 358 each coordinate Mn(2+).

Belongs to the phosphopentomutase family. It depends on Mn(2+) as a cofactor.

It is found in the cytoplasm. The catalysed reaction is 2-deoxy-alpha-D-ribose 1-phosphate = 2-deoxy-D-ribose 5-phosphate. It catalyses the reaction alpha-D-ribose 1-phosphate = D-ribose 5-phosphate. It functions in the pathway carbohydrate degradation; 2-deoxy-D-ribose 1-phosphate degradation; D-glyceraldehyde 3-phosphate and acetaldehyde from 2-deoxy-alpha-D-ribose 1-phosphate: step 1/2. Its function is as follows. Isomerase that catalyzes the conversion of deoxy-ribose 1-phosphate (dRib-1-P) and ribose 1-phosphate (Rib-1-P) to deoxy-ribose 5-phosphate (dRib-5-P) and ribose 5-phosphate (Rib-5-P), respectively. The sequence is that of Phosphopentomutase from Allorhizobium ampelinum (strain ATCC BAA-846 / DSM 112012 / S4) (Agrobacterium vitis (strain S4)).